An 85-amino-acid polypeptide reads, in one-letter code: Large ribosomal subunit protein bL27 (85 aa).

Residues 1–11 (MASKASGGSTR) show a composition bias toward polar residues. Positions 1-20 (MASKASGGSTRNGRDSISKR) are disordered.

Belongs to the bacterial ribosomal protein bL27 family.

This chain is Large ribosomal subunit protein bL27, found in Sulfurihydrogenibium sp. (strain YO3AOP1).